Here is a 144-residue protein sequence, read N- to C-terminus: Effector EagT6 (144 aa).

Homodimer. Two dimers interact with Tse6; this interaction is crucial for Tse6 loading onto VgrG1a.

Plays an essential role in toxin Tse6 delivery to target cells and specifically in the loading of Tse6 onto VgrG1a. This Pseudomonas aeruginosa (strain ATCC 15692 / DSM 22644 / CIP 104116 / JCM 14847 / LMG 12228 / 1C / PRS 101 / PAO1) protein is Effector EagT6.